Here is a 694-residue protein sequence, read N- to C-terminus: Methionine--tRNA ligase (694 aa).

The short motif at 12–22 (PYANGPLHLGH) is the 'HIGH' region element. Residues Cys143, Cys146, Cys156, and Cys159 each coordinate Zn(2+). A 'KMSKS' region motif is present at residues 330 to 334 (KMSKS). Lys333 lines the ATP pocket. A compositionally biased stretch (low complexity) spans 550-573 (MAAPAAPATTTKPAPSKADAKPAA). Residues 550–582 (MAAPAAPATTTKPAPSKADAKPAAVANPESQTT) form a disordered region. Positions 591-694 (DFAKLDLRIG…SGAQPGMPVR (104 aa)) constitute a tRNA-binding domain.

Belongs to the class-I aminoacyl-tRNA synthetase family. MetG type 1 subfamily. Homodimer. Zn(2+) serves as cofactor.

The protein resides in the cytoplasm. It carries out the reaction tRNA(Met) + L-methionine + ATP = L-methionyl-tRNA(Met) + AMP + diphosphate. Is required not only for elongation of protein synthesis but also for the initiation of all mRNA translation through initiator tRNA(fMet) aminoacylation. The protein is Methionine--tRNA ligase of Xanthomonas euvesicatoria pv. vesicatoria (strain 85-10) (Xanthomonas campestris pv. vesicatoria).